The chain runs to 423 residues: Tegument protein UL43 (423 aa).

Positions 1–12 are enriched in polar residues; the sequence is MEKTPAETTAVS. Positions 1–46 are disordered; sequence MEKTPAETTAVSAGNVPRDSIPCITNVSADTRGRTRPSRPATVPQR.

It belongs to the herpesviridae US22 family.

Its subcellular location is the virion tegument. This Homo sapiens (Human) protein is Tegument protein UL43 (UL43).